A 180-amino-acid polypeptide reads, in one-letter code: tRNA (cytidine(56)-2'-O)-methyltransferase (180 aa).

S-adenosyl-L-methionine is bound by residues leucine 84 and 112 to 116; that span reads GAEKV.

Belongs to the aTrm56 family. In terms of assembly, homodimer.

The protein resides in the cytoplasm. It carries out the reaction cytidine(56) in tRNA + S-adenosyl-L-methionine = 2'-O-methylcytidine(56) in tRNA + S-adenosyl-L-homocysteine + H(+). Functionally, specifically catalyzes the AdoMet-dependent 2'-O-ribose methylation of cytidine at position 56 in tRNAs. The chain is tRNA (cytidine(56)-2'-O)-methyltransferase from Natronomonas pharaonis (strain ATCC 35678 / DSM 2160 / CIP 103997 / JCM 8858 / NBRC 14720 / NCIMB 2260 / Gabara) (Halobacterium pharaonis).